The following is a 289-amino-acid chain: MKKLSFQQIILALQNYWQDYGCAILQPYDAHVGAGTFHPATVLRCLGSKPWSVAYVQPSRRPGDSRYGMHPNRMQHYYQFQVILKPSPDNIQELYLKSLECLGIDLKKHDIRFVEDDWESPTLGAAGLGWEVWCNGMEVSQFTYMQQIGGIECRPVAGEITYGLERLALYIQGVDEVKELDWNGQIGEKALKYGEVDFEAERQFSKYNLELANSKMLLRHFKDSEEECKRLVDGDVPLAAYDECLKASHTFNQLNALGVISVTERASYILRVRHLAKICCMKWLELSGE.

The protein belongs to the class-II aminoacyl-tRNA synthetase family. In terms of assembly, tetramer of two alpha and two beta subunits.

It localises to the cytoplasm. It carries out the reaction tRNA(Gly) + glycine + ATP = glycyl-tRNA(Gly) + AMP + diphosphate. This is Glycine--tRNA ligase alpha subunit from Rickettsia felis (strain ATCC VR-1525 / URRWXCal2) (Rickettsia azadi).